Here is a 466-residue protein sequence, read N- to C-terminus: 20-hydroxyecdysone protein (466 aa).

A signal peptide spans 1-16 (MKPVALILVFLAISQA). Residues 48-50 (EVK) form a 1; approximate repeat. Residues 48–157 (EVKAEEVKPE…EIKKEATEIK (110 aa)) form a 16 X repeats region. One copy of the 2; approximate repeat lies at 53-55 (EVK). The interval 55 to 94 (KPEEVKPIAQEEKAKDLKEEVKPEIKPEIKEQPKPDIKDE) is disordered. Residues 58–60 (EVK) form a 3; approximate repeat. A 4; approximate repeat occupies 70–72 (DLK). A 5; approximate repeat occupies 74–76 (EVK). The stretch at 78–80 (EIK) is one 6; approximate repeat. One copy of the 7; approximate repeat lies at 82–84 (EIK). The 8; approximate repeat unit spans residues 90 to 92 (DIK). A 9; approximate repeat occupies 94 to 96 (EIK). The stretch at 98 to 100 (DLK) is one 10; approximate repeat. The 11; approximate repeat unit spans residues 102–104 (DIK). Residues 106–108 (ELK) form a 12; approximate repeat. The segment at 119-220 (PNAKPLELKE…QQSTTQGNFV (102 aa)) is disordered. Residues 124–160 (LELKEKSLEAEEKPQEIKEEVQQPEIKKEATEIKEEP) show a composition bias toward basic and acidic residues. One copy of the 13; approximate repeat lies at 125–127 (ELK). A 14; approximate repeat occupies 139–141 (EIK). Residues 148 to 150 (EIK) form a 15; approximate repeat. The 16; approximate repeat unit spans residues 155-157 (EIK). Positions 170–180 (AEETVVVPAEE) are enriched in low complexity. Residues 185-194 (PVEQEQSENQ) are compositionally biased toward polar residues. The span at 203–216 (QATQATPTQQSTTQ) shows a compositional bias: low complexity. Residues N294 and N352 are each glycosylated (N-linked (GlcNAc...) asparagine). The disordered stretch occupies residues 378-435 (RPQNAPAAAPATQATEKPAVDDKIDPANDEVGEFVPESDNELRASGENIDDSFEDAGV). The segment covering 379-394 (PQNAPAAAPATQATEK) has biased composition (low complexity). Residues 404 to 416 (ANDEVGEFVPESD) show a composition bias toward acidic residues.

Its subcellular location is the secreted. Functionally, probably has an essential role in embryogenesis, induces morphogenesis of imaginal disks, and may participate in multimolecular aggregates. The sequence is that of 20-hydroxyecdysone protein (ImpE2) from Drosophila melanogaster (Fruit fly).